An 855-amino-acid polypeptide reads, in one-letter code: Protein translocase subunit SecA (855 aa).

Residues glutamine 85, 103 to 107 (GEGKT), and aspartate 492 each bind ATP. The tract at residues 794–845 (AAIHEESSSAAAPGPGQNQPGGPGGPSAGPVAPVRNLDKHGRNELCPCGSGK) is disordered. Residues 801-811 (SSAAAPGPGQN) show a composition bias toward low complexity. Positions 839, 841, 850, and 851 each coordinate Zn(2+).

Belongs to the SecA family. Monomer and homodimer. Part of the essential Sec protein translocation apparatus which comprises SecA, SecYEG and auxiliary proteins SecDF. Other proteins may also be involved. The cofactor is Zn(2+).

The protein localises to the cell membrane. Its subcellular location is the cytoplasm. The enzyme catalyses ATP + H2O + cellular proteinSide 1 = ADP + phosphate + cellular proteinSide 2.. Functionally, part of the Sec protein translocase complex. Interacts with the SecYEG preprotein conducting channel. Has a central role in coupling the hydrolysis of ATP to the transfer of proteins into and across the cell membrane, serving as an ATP-driven molecular motor driving the stepwise translocation of polypeptide chains across the membrane. The protein is Protein translocase subunit SecA of Clostridium beijerinckii (strain ATCC 51743 / NCIMB 8052) (Clostridium acetobutylicum).